We begin with the raw amino-acid sequence, 715 residues long: Polyribonucleotide nucleotidyltransferase (715 aa).

2 residues coordinate Mg(2+): D485 and D491. The 60-residue stretch at 552 to 611 (PRIHTMKIDPKKIKDVIGKGGAVIRALTEETGTSIDIDDDGTVKIAATDNNAAKAVMARI) folds into the KH domain. Residues 621-689 (NAIYKGKVTR…RQNRIRLTMK (69 aa)) form the S1 motif domain. A disordered region spans residues 695–715 (TPVAENVTEEAEVSSEQQAEI).

The protein belongs to the polyribonucleotide nucleotidyltransferase family. In terms of assembly, component of the RNA degradosome, which is a multiprotein complex involved in RNA processing and mRNA degradation. Requires Mg(2+) as cofactor.

The protein localises to the cytoplasm. The catalysed reaction is RNA(n+1) + phosphate = RNA(n) + a ribonucleoside 5'-diphosphate. In terms of biological role, involved in mRNA degradation. Catalyzes the phosphorolysis of single-stranded polyribonucleotides processively in the 3'- to 5'-direction. The sequence is that of Polyribonucleotide nucleotidyltransferase from Actinobacillus pleuropneumoniae serotype 7 (strain AP76).